The following is a 316-amino-acid chain: Transaldolase (316 aa).

Lys132 (schiff-base intermediate with substrate) is an active-site residue.

It belongs to the transaldolase family. Type 1 subfamily. Homodimer.

The protein localises to the cytoplasm. The enzyme catalyses D-sedoheptulose 7-phosphate + D-glyceraldehyde 3-phosphate = D-erythrose 4-phosphate + beta-D-fructose 6-phosphate. It participates in carbohydrate degradation; pentose phosphate pathway; D-glyceraldehyde 3-phosphate and beta-D-fructose 6-phosphate from D-ribose 5-phosphate and D-xylulose 5-phosphate (non-oxidative stage): step 2/3. Transaldolase is important for the balance of metabolites in the pentose-phosphate pathway. This chain is Transaldolase, found in Vibrio campbellii (strain ATCC BAA-1116).